The sequence spans 143 residues: Flagellar assembly factor FliW (143 aa).

This sequence belongs to the FliW family. As to quaternary structure, interacts with translational regulator CsrA and flagellin(s).

The protein localises to the cytoplasm. Functionally, acts as an anti-CsrA protein, binds CsrA and prevents it from repressing translation of its target genes, one of which is flagellin. Binds to flagellin and participates in the assembly of the flagellum. This chain is Flagellar assembly factor FliW, found in Clostridium botulinum (strain Langeland / NCTC 10281 / Type F).